The primary structure comprises 783 residues: MIVLRDSSDYSDSEVDLPSIEVNGERGNVPTSVLCNVEGSLLNSNPALRQPNLKCIKHNQDVENTTFQLDLRGCRVPSSQPQVITELENNIDIPKNIDAMQNWIFPQTQQYRNYQKEFCEQALFHNLLLALPTGLGKTFIAAVVMLNYFRWFPESKIIFLAPTKPLLLQQRVACSNVAGMSPGATAELNGEVSPDRRLFEYNTKRVFFMTPQTLQNDLKEHLLDAKSIICLIFDEAHRATGNHSYAQVMRAVLRSNSHFRVLGLTATPGSSTASVQKVVDCLHISKLIVRNEESIDIRSYVFHKKIQLIKVTISSEMNILKSDFANLYRPYFNFLRQKKLIPINCECLNIKAYTLFVSLRKYSFSSKNVQSKEKSKIMSCFTLLISCAHITYLLDCHGIIQFYQKLVETKNKAEGKGSGQSFWLFTSKPFAFYLEHLHNKIQGLSLNHPKMNHLLELLKEHFKDTSEGYQNQRVMIFTEFRNTAEYITTTLLAIRPMVRASLFIGQANSAYSTGMNQMQQKETIDQFRAGVINTLVATSIGEEGLDIGDTDMIICYDASSSPIRTIQRMGRTGRKKSGKVFVLLTEDCEDSKWERSQVSYRRVQKVIESGKKIALKKDVPRLIPSNIQPIFKFQALQNNADATLILNSYNNNSSSLSPVNTLANQAHSRSKRYLPFIVDDVFEDMESNLRVPTEDAKIKRFKSDYRSCIYNARRNVFSKPTYMGDKLTKFAKVPHSLLTLSIYRRGRLLQQCSPSSVTKYLKYEEKFKRKRMKKTSNALFQST.

A Helicase ATP-binding domain is found at 118–286 (FCEQALFHNL…KVVDCLHISK (169 aa)). Residue 131–138 (LPTGLGKT) participates in ATP binding. Residues 234-237 (DEAH) carry the DEAH box motif. In terms of domain architecture, Helicase C-terminal spans 450 to 619 (KMNHLLELLK…GKKIALKKDV (170 aa)).

Belongs to the DEAD box helicase family. DEAH subfamily. FANCM sub-subfamily.

It is found in the nucleus. Its subcellular location is the nucleolus. It catalyses the reaction ATP + H2O = ADP + phosphate + H(+). In Schizosaccharomyces pombe (strain 972 / ATCC 24843) (Fission yeast), this protein is Putative ATP-dependent DNA helicase fml2.